Consider the following 66-residue polypeptide: Sarcoplasmic/endoplasmic reticulum calcium ATPase regulator ARLN (66 aa).

The residue at position 1 (methionine 1) is an N-acetylmethionine. Positions 1-38 are disordered; the sequence is MEVDVPGVDGRDGLRERRGLSEGGRQNLDVRPQSGANG. Residues 9 to 20 are compositionally biased toward basic and acidic residues; that stretch reads DGRDGLRERRGL. A helical membrane pass occupies residues 45 to 65; the sequence is WLDLWLFIFFDVVVFLFVYFL.

Homooligomer. Can also form heterooligomers with other sarcoplasmic/endoplasmic reticulum calcium ATPase (SERCA) regulators ERLN, PLN, SLN and STRIT1/DWORF. Monomer. Interacts as a monomer with ATP2A2/SERCA2; the interaction results in inhibition of ATP2A2 Ca(2+) affinity.

It localises to the endoplasmic reticulum membrane. In terms of biological role, inhibits the activity of the calcium ATPases ATP2A2/SERCA2 and ATP2A3/SERCA3 by decreasing their apparent affinity for Ca(2+). This is Sarcoplasmic/endoplasmic reticulum calcium ATPase regulator ARLN (ARLN) from Pongo abelii (Sumatran orangutan).